The following is a 38-amino-acid chain: Large ribosomal subunit protein bL36 (38 aa).

It belongs to the bacterial ribosomal protein bL36 family.

In Amoebophilus asiaticus (strain 5a2), this protein is Large ribosomal subunit protein bL36.